The sequence spans 430 residues: Tol-Pal system protein TolB (430 aa).

Positions 1-21 (MKQALRVAFGFLMLWAAVLHA) are cleaved as a signal peptide.

It belongs to the TolB family. As to quaternary structure, the Tol-Pal system is composed of five core proteins: the inner membrane proteins TolA, TolQ and TolR, the periplasmic protein TolB and the outer membrane protein Pal. They form a network linking the inner and outer membranes and the peptidoglycan layer.

The protein localises to the periplasm. Its function is as follows. Part of the Tol-Pal system, which plays a role in outer membrane invagination during cell division and is important for maintaining outer membrane integrity. TolB occupies a key intermediary position in the Tol-Pal system because it communicates directly with both membrane-embedded components, Pal in the outer membrane and TolA in the inner membrane. This chain is Tol-Pal system protein TolB, found in Salmonella typhi.